The primary structure comprises 102 residues: MYAIIETGGKQVKVEEGQTVYIEKLAAEAGETVTFENVLFVGGDTVKVGNPSVAGATVTAKVEKQGRGKKITVFKYKPKKNNHKKQGHRQPYTKVVIEKINA.

Belongs to the bacterial ribosomal protein bL21 family. In terms of assembly, part of the 50S ribosomal subunit. Contacts protein L20.

This protein binds to 23S rRNA in the presence of protein L20. The polypeptide is Large ribosomal subunit protein bL21 (Bacillus pumilus (strain SAFR-032)).